The sequence spans 607 residues: UvrABC system protein C (607 aa).

The GIY-YIG domain maps to 29–106 (DKPGVYLMKD…IKKHNPKYNI (78 aa)). One can recognise a UVR domain in the interval 211–246 (GAILKALEKKMKEASENLEFERAKEYRDLMEDLKKV).

The protein belongs to the UvrC family. As to quaternary structure, interacts with UvrB in an incision complex.

Its subcellular location is the cytoplasm. In terms of biological role, the UvrABC repair system catalyzes the recognition and processing of DNA lesions. UvrC both incises the 5' and 3' sides of the lesion. The N-terminal half is responsible for the 3' incision and the C-terminal half is responsible for the 5' incision. The sequence is that of UvrABC system protein C from Desulfitobacterium hafniense (strain Y51).